A 183-amino-acid chain; its full sequence is Adenine phosphoribosyltransferase (183 aa).

Belongs to the purine/pyrimidine phosphoribosyltransferase family. Homodimer.

The protein resides in the cytoplasm. It carries out the reaction AMP + diphosphate = 5-phospho-alpha-D-ribose 1-diphosphate + adenine. It participates in purine metabolism; AMP biosynthesis via salvage pathway; AMP from adenine: step 1/1. Catalyzes a salvage reaction resulting in the formation of AMP, that is energically less costly than de novo synthesis. This Shewanella piezotolerans (strain WP3 / JCM 13877) protein is Adenine phosphoribosyltransferase.